The following is an 83-amino-acid chain: Turripeptide Lol11.2 (83 aa).

Positions 1–27 (MARLMMTVGCLIFIVVLLDMMVPVSNT) are cleaved as a signal peptide.

It belongs to the conopeptide I2-like superfamily. Contains 4 disulfide bonds. As to expression, expressed by the venom duct.

It localises to the secreted. Its function is as follows. Acts as a neurotoxin by inhibiting voltage-gated potassium channels (Kv). The chain is Turripeptide Lol11.2 from Iotyrris olangoensis (Sea snail).